The chain runs to 351 residues: Protein Wnt-4 (351 aa).

The first 22 residues, 1–22 (MTPEYFLRSLLMMILAVFSANA), serve as a signal peptide directing secretion. 11 cysteine pairs are disulfide-bonded: Cys-78/Cys-89, Cys-128/Cys-136, Cys-138/Cys-155, Cys-206/Cys-220, Cys-208/Cys-215, Cys-280/Cys-311, Cys-296/Cys-306, Cys-310/Cys-350, Cys-326/Cys-341, Cys-328/Cys-338, and Cys-333/Cys-334. A glycan (N-linked (GlcNAc...) asparagine) is linked at Asn-88. A lipid anchor (O-palmitoleoyl serine; by PORCN) is attached at Ser-212. A glycan (N-linked (GlcNAc...) asparagine) is linked at Asn-297.

This sequence belongs to the Wnt family. In terms of processing, palmitoleoylation is required for efficient binding to frizzled receptors. Depalmitoleoylation leads to Wnt signaling pathway inhibition. In terms of tissue distribution, expressed in the brain and floor plate. In the developing pronephros, expressed in the proximal tubules and nephrostomes but absent from the pronephric duct.

It is found in the secreted. The protein resides in the extracellular space. It localises to the extracellular matrix. Ligand for members of the frizzled family of seven transmembrane receptors. Plays an important role in embryonic kidney development. Acts downstream of Notch signaling during pronephric kidney development. During early pronephros development, patterns the proximal pronephric anlagen to promote glomus and nephrostome formation. Also required later in pronephros development for tubulogenesis. The protein is Protein Wnt-4 (wnt4) of Xenopus laevis (African clawed frog).